We begin with the raw amino-acid sequence, 244 residues long: MLSNTLIIACLLVIGTTIALIAVQKASSKTGIKQKSYQPSIIIAGPQNSGKTSLLTLLTTDSVRPTVVSQEPLSAADYDGSGVTLVDFPGHVKLRYKLSDYLKTRAKFVKGLIFMVDSTVDPKKLTTTAEFLVDILSITESSCENGIDILIACNKSELFTARPPSKIKDALESEIQKVIERRKKSLNEVERKINEEDYAENTLDVLQSTDGFKFANLEASVVAFEGSINKRKISQWREWIDEKL.

A helical membrane pass occupies residues 7–23 (IIACLLVIGTTIALIAV). GTP is bound by residues 45 to 53 (GPQNSGKTS), 66 to 69 (TVVS), G90, and 154 to 157 (NKSE).

This sequence belongs to the SRP receptor beta subunit family. In terms of assembly, heterodimer of an alpha and a beta chain.

Its subcellular location is the endoplasmic reticulum membrane. Functionally, component of the signal recognition particle (SRP) complex receptor (SR). Ensures, in conjunction with the SRP complex, the correct targeting of the nascent secretory proteins to the endoplasmic reticulum membrane system. May mediate the membrane association of SR. The polypeptide is Signal recognition particle receptor subunit beta (SRP102) (Saccharomyces cerevisiae (strain ATCC 204508 / S288c) (Baker's yeast)).